The following is a 212-amino-acid chain: Abscisic acid receptor PYL10 (212 aa).

The START-like stretch occupies residues 34–191 (YAVGPGQCSS…NLQKLKSVSE (158 aa)). Abscisate is bound by residues K70, 107 to 112 (ASTSTE), 134 to 140 (RLRNYRS), and E156. The Gate loop signature appears at 103 to 107 (SGLPA). Positions 133–135 (HRL) match the Latch loop motif.

This sequence belongs to the PYR/PYL/RCAR abscisic acid intracellular receptor family. As to quaternary structure, homodimer. Interacts with PP2C53. Binding to PP2C53 is dependent on the presence of abscisic acid (ABA). Interacts with PP2C50. Binding to PP2C50 is dependent on the presence of ABA.

The protein resides in the cytoplasm. The protein localises to the cytosol. Its subcellular location is the nucleus. Functionally, inhibits the protein phosphatases PP2C06 and PP2C09 when activated by abscisic acid (ABA). Together with PP2C53, SAPK8 and SAPK10, may form an ABA signaling module involved in stress response. The polypeptide is Abscisic acid receptor PYL10 (Oryza sativa subsp. japonica (Rice)).